We begin with the raw amino-acid sequence, 278 residues long: Large ribosomal subunit protein uL2c (278 aa).

The interval 224–256 (NPVDHPHGGGEGRAPIGRKKPTTPWGYPALGRK) is disordered.

The protein belongs to the universal ribosomal protein uL2 family. Part of the 50S ribosomal subunit.

Its subcellular location is the plastid. The chain is Large ribosomal subunit protein uL2c (rpl2) from Cuscuta exaltata (Tall dodder).